The chain runs to 351 residues: Phosphoribosylformylglycinamidine cyclo-ligase (351 aa).

This sequence belongs to the AIR synthase family.

It is found in the cytoplasm. The enzyme catalyses 2-formamido-N(1)-(5-O-phospho-beta-D-ribosyl)acetamidine + ATP = 5-amino-1-(5-phospho-beta-D-ribosyl)imidazole + ADP + phosphate + H(+). It participates in purine metabolism; IMP biosynthesis via de novo pathway; 5-amino-1-(5-phospho-D-ribosyl)imidazole from N(2)-formyl-N(1)-(5-phospho-D-ribosyl)glycinamide: step 2/2. This is Phosphoribosylformylglycinamidine cyclo-ligase from Burkholderia cenocepacia (strain HI2424).